The primary structure comprises 422 residues: MILIKNGRVMDPKSQRDQVADVLIDGKQIVKIASAIECQEAQVIDASGLIVAPGLVDIHVHFREPGQTHKEDIHTGALAAAAGGVTTVVMMANTNPVISDVETLQEVLASAAKEKIHIYTNASVTQAFNGKDVTDFKALLEAGAVSFSDDGIPLESSKVLKEAFDLANANQTFISLHEEDPQLNGVLGFNEGIAEEHFHFCGATGVAEYSMIARDVMIAYDRQAHVHIQHLSKAESVQVVAFAQQLGAKVTAEVSPQHFSTTEDLLLIAGTSAKMNPPLRTQRDRLAVIEGLKSGVITVIATDHAPHHKDEKTVDDMTKAPSGMTGLETSLSLGLTHLVEPGHLTLMSLLEKMTLNPALLYGFDAGYLAENGPADLVIFADKQERLITENFASKASNSPFIGNKLKGVVKYTIADGEVVYPN.

Zn(2+) is bound by residues His-59 and His-61. Substrate-binding positions include His-61–Arg-63 and Asn-93. Residues Asp-150, His-177, and His-230 each contribute to the Zn(2+) site. Residue Asn-276 participates in substrate binding. Asp-303 is a Zn(2+) binding site. The active site involves Asp-303. His-307 is a substrate binding site.

The protein belongs to the metallo-dependent hydrolases superfamily. DHOase family. Class I DHOase subfamily. The cofactor is Zn(2+).

It catalyses the reaction (S)-dihydroorotate + H2O = N-carbamoyl-L-aspartate + H(+). It participates in pyrimidine metabolism; UMP biosynthesis via de novo pathway; (S)-dihydroorotate from bicarbonate: step 3/3. Functionally, catalyzes the reversible cyclization of carbamoyl aspartate to dihydroorotate. The sequence is that of Dihydroorotase from Streptococcus pyogenes serotype M1.